The chain runs to 252 residues: Trans-aconitate 2-methyltransferase (252 aa).

The protein belongs to the methyltransferase superfamily. Tam family.

Its subcellular location is the cytoplasm. The catalysed reaction is trans-aconitate + S-adenosyl-L-methionine = (E)-3-(methoxycarbonyl)pent-2-enedioate + S-adenosyl-L-homocysteine. Functionally, catalyzes the S-adenosylmethionine monomethyl esterification of trans-aconitate. The sequence is that of Trans-aconitate 2-methyltransferase from Escherichia coli (strain SE11).